The primary structure comprises 1162 residues: PAN2-PAN3 deadenylation complex catalytic subunit PAN2 (1162 aa).

WD repeat units lie at residues 27-66 (AKEK…YTRH), 153-193 (NTVQ…VVKT), 196-233 (GHSC…NVYD), and 300-339 (HPCQ…TGFT). The linker stretch occupies residues 341 to 491 (TATTILEYPD…LMNYKPSNDR (151 aa)). Residues 401–443 (VPLPPKSSAASSSHTALSTSSDSRPNTARSGNPSSGGQKYRLL) are disordered. A compositionally biased stretch (low complexity) spans 407 to 423 (SSAASSSHTALSTSSDS). Residues 424 to 437 (RPNTARSGNPSSGG) show a composition bias toward polar residues. One can recognise a USP domain in the interval 492–904 (EVPPAFTKLQ…TPEIAIYSDA (413 aa)). In terms of domain architecture, Exonuclease spans 956–1126 (VALDAEFVAL…IEDAYTALVL (171 aa)). The a divalent metal cation site is built by aspartate 959, glutamate 961, aspartate 1068, and aspartate 1119.

Belongs to the peptidase C19 family. PAN2 subfamily. Forms a heterotrimer with an asymmetric homodimer of the regulatory subunit PAN3 to form the poly(A)-nuclease (PAN) deadenylation complex. A divalent metal cation is required as a cofactor.

It is found in the cytoplasm. The enzyme catalyses Exonucleolytic cleavage of poly(A) to 5'-AMP.. With respect to regulation, positively regulated by the regulatory subunit PAN3. Its function is as follows. Catalytic subunit of the poly(A)-nuclease (PAN) deadenylation complex, one of two cytoplasmic mRNA deadenylases involved in mRNA turnover. PAN specifically shortens poly(A) tails of RNA and the activity is stimulated by poly(A)-binding protein PAB1. PAN deadenylation is followed by rapid degradation of the shortened mRNA tails by the CCR4-NOT complex. Deadenylated mRNAs are then degraded by two alternative mechanisms, namely exosome-mediated 3'-5' exonucleolytic degradation, or deadenylation-dependent mRNA decaping and subsequent 5'-3' exonucleolytic degradation by XRN1. May also be involved in post-transcriptional maturation of mRNA poly(A) tails. In Eremothecium gossypii (strain ATCC 10895 / CBS 109.51 / FGSC 9923 / NRRL Y-1056) (Yeast), this protein is PAN2-PAN3 deadenylation complex catalytic subunit PAN2.